Reading from the N-terminus, the 213-residue chain is Flagellin A1 (213 aa).

The propeptide occupies 1–10 (MFENINEDRG). N-linked (GlcNAc...) asparagine glycans are attached at residues Asn70, Asn115, and Asn172.

The protein belongs to the archaeal flagellin family. In terms of processing, glycosylated by a pentasaccharide similar to the S-layer glycoprotein, probably comprising a hexose, 2 hexuronic acids, a methyl ester of a hexuronic acid and mannose. Glycosylation is required for biosynthesis of stable flagella.

The protein resides in the archaeal flagellum. Its function is as follows. Major flagellin required for motility. Not involved in PibD-dependent surface adhesion. Much more abundant in cells compared to FlgA2. This chain is Flagellin A1 (flgA1), found in Haloferax volcanii (strain ATCC 29605 / DSM 3757 / JCM 8879 / NBRC 14742 / NCIMB 2012 / VKM B-1768 / DS2) (Halobacterium volcanii).